Reading from the N-terminus, the 433-residue chain is ATP-dependent protease ATPase subunit HslU (433 aa).

ATP-binding positions include I18, 60–65, D246, E311, and R383; that span reads GVGKTE.

It belongs to the ClpX chaperone family. HslU subfamily. A double ring-shaped homohexamer of HslV is capped on each side by a ring-shaped HslU homohexamer. The assembly of the HslU/HslV complex is dependent on binding of ATP.

The protein localises to the cytoplasm. ATPase subunit of a proteasome-like degradation complex; this subunit has chaperone activity. The binding of ATP and its subsequent hydrolysis by HslU are essential for unfolding of protein substrates subsequently hydrolyzed by HslV. HslU recognizes the N-terminal part of its protein substrates and unfolds these before they are guided to HslV for hydrolysis. This chain is ATP-dependent protease ATPase subunit HslU, found in Cereibacter sphaeroides (strain ATCC 17025 / ATH 2.4.3) (Rhodobacter sphaeroides).